The sequence spans 71 residues: Protein MMP24OS (71 aa).

The span at 1-10 (MGAQLSGGRG) shows a compositional bias: gly residues. The interval 1-61 (MGAQLSGGRG…PSPWGPLDDV (61 aa)) is disordered. Residues 36–55 (HPPQPQPQPQPQPQPEPSPW) show a composition bias toward pro residues.

This chain is Protein MMP24OS, found in Homo sapiens (Human).